Consider the following 209-residue polypeptide: Large ribosomal subunit protein uL3 (209 aa).

A disordered region spans residues 127-166 (NFGGGSRTHGQSDRLRAPGSVGGSSDPSRTFKGTRMAGRM).

Belongs to the universal ribosomal protein uL3 family. In terms of assembly, part of the 50S ribosomal subunit. Forms a cluster with proteins L14 and L19.

Its function is as follows. One of the primary rRNA binding proteins, it binds directly near the 3'-end of the 23S rRNA, where it nucleates assembly of the 50S subunit. This is Large ribosomal subunit protein uL3 from Chlorobaculum tepidum (strain ATCC 49652 / DSM 12025 / NBRC 103806 / TLS) (Chlorobium tepidum).